Reading from the N-terminus, the 250-residue chain is N-acyl homoserine lactonase (250 aa).

Zn(2+) contacts are provided by histidine 104, histidine 106, aspartate 108, histidine 109, histidine 169, aspartate 191, and histidine 235.

It belongs to the metallo-beta-lactamase superfamily. In terms of assembly, monomer. Zn(2+) is required as a cofactor.

It carries out the reaction an N-acyl-L-homoserine lactone + H2O = an N-acyl-L-homoserine + H(+). The sequence is that of N-acyl homoserine lactonase from Bacillus cereus.